The sequence spans 551 residues: Chaperonin GroEL 4 (551 aa).

ATP-binding positions include 30–33 (TLGP), Lys51, 87–91 (DGTTT), Gly415, and Asp495.

Belongs to the chaperonin (HSP60) family. In terms of assembly, forms a cylinder of 14 subunits composed of two heptameric rings stacked back-to-back. Interacts with the co-chaperonin GroES.

Its subcellular location is the cytoplasm. The catalysed reaction is ATP + H2O + a folded polypeptide = ADP + phosphate + an unfolded polypeptide.. In terms of biological role, together with its co-chaperonin GroES, plays an essential role in assisting protein folding. The GroEL-GroES system forms a nano-cage that allows encapsulation of the non-native substrate proteins and provides a physical environment optimized to promote and accelerate protein folding. The protein is Chaperonin GroEL 4 of Mesorhizobium japonicum (strain LMG 29417 / CECT 9101 / MAFF 303099) (Mesorhizobium loti (strain MAFF 303099)).